The sequence spans 521 residues: Bifunctional purine biosynthesis protein PurH (521 aa).

The MGS-like domain occupies 1-145 (MIKQALISVS…KNHRDVTVVV (145 aa)).

This sequence belongs to the PurH family.

It catalyses the reaction (6R)-10-formyltetrahydrofolate + 5-amino-1-(5-phospho-beta-D-ribosyl)imidazole-4-carboxamide = 5-formamido-1-(5-phospho-D-ribosyl)imidazole-4-carboxamide + (6S)-5,6,7,8-tetrahydrofolate. The catalysed reaction is IMP + H2O = 5-formamido-1-(5-phospho-D-ribosyl)imidazole-4-carboxamide. It functions in the pathway purine metabolism; IMP biosynthesis via de novo pathway; 5-formamido-1-(5-phospho-D-ribosyl)imidazole-4-carboxamide from 5-amino-1-(5-phospho-D-ribosyl)imidazole-4-carboxamide (10-formyl THF route): step 1/1. It participates in purine metabolism; IMP biosynthesis via de novo pathway; IMP from 5-formamido-1-(5-phospho-D-ribosyl)imidazole-4-carboxamide: step 1/1. The protein is Bifunctional purine biosynthesis protein PurH of Burkholderia thailandensis (strain ATCC 700388 / DSM 13276 / CCUG 48851 / CIP 106301 / E264).